The primary structure comprises 1427 residues: Multidrug resistance-associated protein 5 (1427 aa).

Residues 1–147 are Cytoplasmic-facing; that stretch reads MPSDSEEVCL…IYRFISTRLW (147 aa). A helical transmembrane segment spans residues 148–168; that stretch reads FSCAVFFFCLIFGFIGPTCFI. One can recognise an ABC transmembrane type-1 1 domain in the interval 151–432; it reads AVFFFCLIFG…IPYGSRYLAE (282 aa). The Extracellular portion of the chain corresponds to 169–185; the sequence is RRLIAFAENPERDEQSR. Residues 186 to 206 traverse the membrane as a helical segment; sequence IVYSYGIALVAAISVVEFARV. Residues 207–268 are Cytoplasmic-facing; the sequence is LSYGATWAVS…RLFDAVTFAP (62 aa). Residues 269-289 traverse the membrane as a helical segment; that stretch reads LVLVGPLVLVGGIGYLLMVIG. Position 290 (R290) is a topological domain, extracellular. Residues 291 to 311 traverse the membrane as a helical segment; sequence WSLLGILVFFVFDVIQFGLGK. Residues 312 to 375 are Cytoplasmic-facing; sequence SMVACRNLAI…RKSGYAQSLA (64 aa). The chain crosses the membrane as a helical span at residues 376–396; that stretch reads IACGPVVPVVAAILTFVGVVL. Residues 397 to 399 are Extracellular-facing; sequence AGN. Residues 400-420 form a helical membrane-spanning segment; sequence DLLASDAFSAITVYFVMLFGI. Residues 421-770 are Cytoplasmic-facing; sequence RMIPYGSRYL…TIAWRIYKQY (350 aa). The ABC transporter 1 domain occupies 486 to 707; the sequence is PTENEVIVVE…NDAYKTFVDA (222 aa). 518 to 525 is a binding site for ATP; that stretch reads GAVGCGKS. A helical membrane pass occupies residues 771–791; the sequence is IHAAGGWPIWTCLVIGFIVNV. Positions 783–1078 constitute an ABC transmembrane type-1 2 domain; that stretch reads LVIGFIVNVV…AVRTQTELEA (296 aa). Over 792–833 the chain is Extracellular; it reads VSNIFSTYWLSRWLKKGHDETTTITNGTEFLEMKTSLADSPV. N-linked (GlcNAc...) asparagine glycosylation is present at N817. Residues 834–854 form a helical membrane-spanning segment; the sequence is TGFYAAVYLVALVVLTISGLF. Topologically, residues 855–909 are cytoplasmic; it reads KACVFVKVSLTAATRLHDRMFQAVIHGATSFFDSTPTGRILNRFSKDMDEIDVKL. A helical membrane pass occupies residues 910 to 930; it reads PFTAEVFLQNMITCLGFLVVI. A topological domain (extracellular) is located at residue T931. A helical membrane pass occupies residues 932 to 952; it reads SVFPYFLLFAIPLFVVFVVFV. Residues 953-1022 lie on the Cytoplasmic side of the membrane; the sequence is SCFRAGIRNL…MFQSAMRWLA (70 aa). A helical membrane pass occupies residues 1023 to 1043; the sequence is VWLDLLVVVMTAIVALLTVML. The Extracellular segment spans residues 1044-1049; it reads TGTVSP. A helical transmembrane segment spans residues 1050 to 1070; it reads ADAGMAIAFAVQMSGIFQFAV. The Cytoplasmic portion of the chain corresponds to 1071–1427; that stretch reads RTQTELEAKM…SSDTDIEVVQ (357 aa). Positions 1117-1351 constitute an ABC transporter 2 domain; it reads INFSEVNLRY…DWSVYKLEDK (235 aa). Position 1151–1158 (1151–1158) interacts with ATP; the sequence is GRTGSGKS. The tract at residues 1361 to 1427 is disordered; that stretch reads VGENSEHSME…SSDTDIEVVQ (67 aa). Over residues 1382–1418 the composition is skewed to basic and acidic residues; it reads DIVKVENEQKDSSDDVVHIESGDDDVKADSSEVKETS.

Belongs to the ABC transporter superfamily. ABCC family. Conjugate transporter (TC 3.A.1.208) subfamily. As to expression, highly expressed in the intestine and pharynx. Expressed at low levels in the hypodermis and in some neurons.

The protein resides in the basolateral cell membrane. Functionally, heme transporter required for the export of intestinal heme to different tissues and subcellular compartments. Also, required for the export of vitamin B12 from the intestine of the mother to the embryo to support embryonic development. In Caenorhabditis elegans, this protein is Multidrug resistance-associated protein 5.